Here is a 154-residue protein sequence, read N- to C-terminus: Transcriptional repressor NrdR (154 aa).

A zinc finger spans residues 3 to 34 (CPFCGAEDTAVADTRLNDEADVVRRRRKCNAC). The ATP-cone domain maps to 49–139 (PQVVKKNGLR…VYRNFEDVDA (91 aa)).

It belongs to the NrdR family. Requires Zn(2+) as cofactor.

Functionally, negatively regulates transcription of bacterial ribonucleotide reductase nrd genes and operons by binding to NrdR-boxes. The protein is Transcriptional repressor NrdR of Dechloromonas aromatica (strain RCB).